A 205-amino-acid polypeptide reads, in one-letter code: Cytochrome c oxidase subunit 3 (205 aa).

The next 5 helical transmembrane spans lie at 29–49 (TIVFLSQELMFFAGLFAMYFV), 72–92 (ALLITVILVSSSVTCQFGVFA), 104–124 (WFLVTIILGSIFVIGQGYEYI), 142–162 (FFITTGFHALHVIAGVMAFVV), and 184–204 (SYYWHFVDVVWIGLFITIYFI).

Associates with subunits I, II and IV to form cytochrome c oxidase. The 4 subunit cytochrome c oxidase forms a supercomplex with the menaquinol-cytochrome c reductase complex (cytochrome bc1).

It localises to the cell membrane. It catalyses the reaction 4 Fe(II)-[cytochrome c] + O2 + 8 H(+)(in) = 4 Fe(III)-[cytochrome c] + 2 H2O + 4 H(+)(out). The sequence is that of Cytochrome c oxidase subunit 3 (ctaE) from Corynebacterium glutamicum (strain ATCC 13032 / DSM 20300 / JCM 1318 / BCRC 11384 / CCUG 27702 / LMG 3730 / NBRC 12168 / NCIMB 10025 / NRRL B-2784 / 534).